The sequence spans 360 residues: Peptide chain release factor 1 (360 aa).

The residue at position 237 (Q237) is an N5-methylglutamine.

It belongs to the prokaryotic/mitochondrial release factor family. In terms of processing, methylated by PrmC. Methylation increases the termination efficiency of RF1.

It localises to the cytoplasm. In terms of biological role, peptide chain release factor 1 directs the termination of translation in response to the peptide chain termination codons UAG and UAA. In Pseudomonas savastanoi pv. phaseolicola (strain 1448A / Race 6) (Pseudomonas syringae pv. phaseolicola (strain 1448A / Race 6)), this protein is Peptide chain release factor 1.